We begin with the raw amino-acid sequence, 1135 residues long: MARYTQRPENALKRANEFIEVGKPLRALDTLQEVFRNKRWNYAYSETVIEPLMFKYLYLCVELKKSHIAKEGLFQYRNMFQLVNVNSLENVIRGYLKMAEEHTEAAQAQSSAAVAVLELDDLDNIATPESILMSAVCGEDAQDRSDRTILLPWVKFLWESYCQCLELLRVNTHCEALYHDIARMAFQFCLKYNRKSEFRRLCDKLRKHLEDICKSSNQTTGVSINKVETQQLCLDTRLYLLDSAIQMELWQEAYKAIEDIHGLMALSKKTPVPKTMANYYQKLAMVFSKAGNQLFHAAALLKLFQLTRELKKNLTKDDLQRMAAHVLLATLSIPLPSAHPEFDRFIEADKSPLEKAQKLAVLLGLPQPPTRVSLIREVVRLNVPQLVSEDFRNLYNWLEVDFNPLNLCKRIQSIVDFIENGSENALLTPYIQSLKDVTIMRLIRQISQVYESIQFQRLLQLASFCNIFELEKLLVESVRHNDMQIRIDHQKNSIYFGTDLTESQREYRPDGPALQSMPSEQIRSQLVNMSTVLTRAVSIVYPNRERDQRAKLRTQMVNHYHEIKDREHQRILQRQKIIEDRKEYIEKQNNAREEEEARRQEEESRKAKLAEQKRLEQEQEERERKRHQNEIQAIREKSLKEKVQQISQTAHGKKMLSKLDEEGIKKLDAEQIAKRESEELQREAKELQSKLKSQEKKIDYFERAKRLEEIPLFEKYLAEKQVKDKEFWEATEKTRIENAIAERKDAVGQQERLKRMYPDRDEFLEALKKERASLYVEKLRKFEAALEAERKKRLADRIIRRREERRQAFLREKEEERLRKEEEIRLAQAAEERAAAEARRLEREADDEKRRAQYEKQRAKEEEAERKIKEDRERLARDLASERERTEKERDTWRPRGGDRPSAPAVGSGEWRRAAPTASERNERGGERIERGGDRIERGGERIERGGDRDRDRKDNEGADSSWRVRREPDSQRAAAPKDSNAQQSRDDKWRRGGERDRDFRNDGPRRDRDDGPRRERDDGPRRDRDDERGFRRNDGPRRTEEPQRETGGNWRDAPRNADRENRRPAGERRDRDVRETRGDQRGSAPKEASSGGGGGNWRTAPAAREEKPASKRDQPQEKENKAADDGEWTSVKRR.

Positions 319–501 constitute a PCI domain; the sequence is LQRMAAHVLL…NSIYFGTDLT (183 aa). 2 stretches are compositionally biased toward basic and acidic residues: residues 588 to 623 and 829 to 899; these read QNNA…EERE and AAEE…RGGD. 2 disordered regions span residues 588–631 and 829–1135; these read QNNA…QNEI and AAEE…VKRR. At serine 908 the chain carries Phosphoserine. Composition is skewed to basic and acidic residues over residues 920 to 971, 985 to 1045, 1053 to 1081, and 1104 to 1125; these read ERNE…EPDS, SRDD…EPQR, DAPR…RGDQ, and AREE…KAAD.

It belongs to the eIF-3 subunit A family. In terms of assembly, component of the eukaryotic translation initiation factor 3 (eIF-3) complex. The eIF-3 complex interacts with pix.

The protein resides in the cytoplasm. Its function is as follows. RNA-binding component of the eukaryotic translation initiation factor 3 (eIF-3) complex, which is involved in protein synthesis of a specialized repertoire of mRNAs and, together with other initiation factors, stimulates binding of mRNA and methionyl-tRNAi to the 40S ribosome. The eIF-3 complex specifically targets and initiates translation of a subset of mRNAs involved in cell proliferation. The polypeptide is Eukaryotic translation initiation factor 3 subunit A (Drosophila erecta (Fruit fly)).